A 478-amino-acid polypeptide reads, in one-letter code: MEKRLRLAPSPTGLLHIGTARTALFNWLYAKKTNGKFFIRIEDTDIVRSKSEYTTNILDGLNWLGLSWDEEPIKQSKRISIYKKNIKKLLEIGAAYRCFTSESEISELREKQKSSGLPPRHDNRHRNLTSNEIKAFLSQGRSSVIRFKIDDETEIKWEDQIRGEIKWKGRDLGGDLVLSRRALGDEIGDPLYNLAVVVDDNFMNITHVVRGEDHISNTAKQILIYKALNFKLPIFSHTPLILNSEGKKLSKRDCVTSIDEFREMGYLPEALANYMAFLGWSIKDSESEILSLKEISRVFNLSDINKAGAKFNWEKLNWINSQYIKQMELTKLRQLIKNYWDDMGWESPSAEWDLKLINLIRDSMLLLKDAIDQSKPFFTLSQMQKEGEEFLNNKDETRESLKYILCYLKEENISTIDSNKAKEIIHKISVENSIKKGILMKSLRVAFFGCLSGPDLIQSWELFSENKSDITLIERCLI.

The 'HIGH' region signature appears at 9 to 19; sequence PSPTGLLHIGT. A 'KMSKS' region motif is present at residues 248-252; it reads KLSKR. ATP is bound at residue Lys-251.

This sequence belongs to the class-I aminoacyl-tRNA synthetase family. Glutamate--tRNA ligase type 1 subfamily. As to quaternary structure, monomer.

The protein resides in the cytoplasm. The catalysed reaction is tRNA(Glu) + L-glutamate + ATP = L-glutamyl-tRNA(Glu) + AMP + diphosphate. Functionally, catalyzes the attachment of glutamate to tRNA(Glu) in a two-step reaction: glutamate is first activated by ATP to form Glu-AMP and then transferred to the acceptor end of tRNA(Glu). This Prochlorococcus marinus (strain MIT 9515) protein is Glutamate--tRNA ligase.